The sequence spans 193 residues: Mediator of RNA polymerase II transcription subunit 30 (193 aa).

The disordered stretch occupies residues 1 to 20; the sequence is MSTPPLAASGMAPGPFAGPQ. N-acetylserine is present on Ser-2. Low complexity predominate over residues 10-20; sequence GMAPGPFAGPQ. A coiled-coil region spans residues 71 to 93; sequence YQDRLAKLQDHLRQLSILFRKLR.

It belongs to the Mediator complex subunit 30 family. In terms of assembly, component of the Mediator complex, which is composed of MED1, MED4, MED6, MED7, MED8, MED9, MED10, MED11, MED12, MED13, MED13L, MED14, MED15, MED16, MED17, MED18, MED19, MED20, MED21, MED22, MED23, MED24, MED25, MED26, MED27, MED29, MED30, MED31, CCNC, CDK8 and CDC2L6/CDK11. The MED12, MED13, CCNC and CDK8 subunits form a distinct module termed the CDK8 module. Mediator containing the CDK8 module is less active than Mediator lacking this module in supporting transcriptional activation. Individual preparations of the Mediator complex lacking one or more distinct subunits have been variously termed ARC, CRSP, DRIP, PC2, SMCC and TRAP.

It localises to the nucleus. Functionally, component of the Mediator complex, a coactivator involved in the regulated transcription of nearly all RNA polymerase II-dependent genes. Mediator functions as a bridge to convey information from gene-specific regulatory proteins to the basal RNA polymerase II transcription machinery. Mediator is recruited to promoters by direct interactions with regulatory proteins and serves as a scaffold for the assembly of a functional preinitiation complex with RNA polymerase II and the general transcription factors. This chain is Mediator of RNA polymerase II transcription subunit 30 (MED30), found in Bos taurus (Bovine).